The primary structure comprises 455 residues: Bifunctional protein GlmU (455 aa).

The segment at 1–226 (MSLDIVILAA…AMEVQGANDR (226 aa)) is pyrophosphorylase. UDP-N-acetyl-alpha-D-glucosamine contacts are provided by residues 8 to 11 (LAAG), Lys22, Gln73, 78 to 79 (GT), 99 to 101 (YGD), Gly136, Glu151, Asn166, and Asn224. Residue Asp101 participates in Mg(2+) binding. Asn224 lines the Mg(2+) pocket. Residues 227 to 247 (KQLSELERHYQMREARRLMAA) form a linker region. Positions 248–455 (GVTLRDPARF…WKRPVKISKD (208 aa)) are N-acetyltransferase. The UDP-N-acetyl-alpha-D-glucosamine site is built by Arg330 and Lys348. His360 functions as the Proton acceptor in the catalytic mechanism. Positions 363 and 374 each coordinate UDP-N-acetyl-alpha-D-glucosamine. Acetyl-CoA contacts are provided by residues Ala377, 383-384 (NY), Ser402, Ala420, and Arg437.

The protein in the N-terminal section; belongs to the N-acetylglucosamine-1-phosphate uridyltransferase family. In the C-terminal section; belongs to the transferase hexapeptide repeat family. Homotrimer. Mg(2+) serves as cofactor.

The protein resides in the cytoplasm. The catalysed reaction is alpha-D-glucosamine 1-phosphate + acetyl-CoA = N-acetyl-alpha-D-glucosamine 1-phosphate + CoA + H(+). It catalyses the reaction N-acetyl-alpha-D-glucosamine 1-phosphate + UTP + H(+) = UDP-N-acetyl-alpha-D-glucosamine + diphosphate. Its pathway is nucleotide-sugar biosynthesis; UDP-N-acetyl-alpha-D-glucosamine biosynthesis; N-acetyl-alpha-D-glucosamine 1-phosphate from alpha-D-glucosamine 6-phosphate (route II): step 2/2. It participates in nucleotide-sugar biosynthesis; UDP-N-acetyl-alpha-D-glucosamine biosynthesis; UDP-N-acetyl-alpha-D-glucosamine from N-acetyl-alpha-D-glucosamine 1-phosphate: step 1/1. The protein operates within bacterial outer membrane biogenesis; LPS lipid A biosynthesis. Its function is as follows. Catalyzes the last two sequential reactions in the de novo biosynthetic pathway for UDP-N-acetylglucosamine (UDP-GlcNAc). The C-terminal domain catalyzes the transfer of acetyl group from acetyl coenzyme A to glucosamine-1-phosphate (GlcN-1-P) to produce N-acetylglucosamine-1-phosphate (GlcNAc-1-P), which is converted into UDP-GlcNAc by the transfer of uridine 5-monophosphate (from uridine 5-triphosphate), a reaction catalyzed by the N-terminal domain. This chain is Bifunctional protein GlmU, found in Pseudomonas syringae pv. syringae (strain B728a).